We begin with the raw amino-acid sequence, 69 residues long: Beta-defensin 1 (69 aa).

Positions 1–21 (MKTHYFLLVMICFLFSQMEPG) are cleaved as a signal peptide. A propeptide spanning residues 22–32 (VGILTSLGRRT) is cleaved from the precursor. Intrachain disulfides connect cysteine 37–cysteine 66, cysteine 44–cysteine 59, and cysteine 49–cysteine 67.

The protein belongs to the beta-defensin family. Monomer. Homodimer. Detected in kidney.

The protein resides in the secreted. The protein localises to the membrane. Has bactericidal activity. May act as a ligand for C-C chemokine receptor CCR6. Positively regulates the sperm motility and bactericidal activity in a CCR6-dependent manner. Binds to CCR6 and triggers Ca2+ mobilization in the sperm which is important for its motility. The protein is Beta-defensin 1 (Defb1) of Mus musculus (Mouse).